The following is a 397-amino-acid chain: Phosphoglycerate kinase (397 aa).

Substrate-binding positions include 21 to 23 (DVN), R36, 59 to 62 (HFGR), R119, and R152. Residues K202, E324, and 354 to 357 (GGDT) each bind ATP.

This sequence belongs to the phosphoglycerate kinase family. As to quaternary structure, monomer.

Its subcellular location is the cytoplasm. It carries out the reaction (2R)-3-phosphoglycerate + ATP = (2R)-3-phospho-glyceroyl phosphate + ADP. It participates in carbohydrate degradation; glycolysis; pyruvate from D-glyceraldehyde 3-phosphate: step 2/5. The sequence is that of Phosphoglycerate kinase from Cereibacter sphaeroides (strain ATCC 17025 / ATH 2.4.3) (Rhodobacter sphaeroides).